The sequence spans 73 residues: Putative membrane protein insertion efficiency factor (73 aa).

Belongs to the UPF0161 family.

Its subcellular location is the cell inner membrane. Its function is as follows. Could be involved in insertion of integral membrane proteins into the membrane. The chain is Putative membrane protein insertion efficiency factor from Treponema denticola (strain ATCC 35405 / DSM 14222 / CIP 103919 / JCM 8153 / KCTC 15104).